The sequence spans 340 residues: Phosphoribosylformylglycinamidine cyclo-ligase (340 aa).

The protein belongs to the AIR synthase family.

It is found in the cytoplasm. The catalysed reaction is 2-formamido-N(1)-(5-O-phospho-beta-D-ribosyl)acetamidine + ATP = 5-amino-1-(5-phospho-beta-D-ribosyl)imidazole + ADP + phosphate + H(+). The protein operates within purine metabolism; IMP biosynthesis via de novo pathway; 5-amino-1-(5-phospho-D-ribosyl)imidazole from N(2)-formyl-N(1)-(5-phospho-D-ribosyl)glycinamide: step 2/2. In Streptococcus pneumoniae serotype 2 (strain D39 / NCTC 7466), this protein is Phosphoribosylformylglycinamidine cyclo-ligase.